A 21-amino-acid chain; its full sequence is Dahlein-5.5 (21 aa).

In terms of tissue distribution, expressed by the skin dorsal glands.

The protein resides in the secreted. Its function is as follows. Has no antimicrobial activity. Strongly inhibits the formation of NO by neuronal nitric oxide synthase at micromolar concentrations. The chain is Dahlein-5.5 from Ranoidea dahlii (Dahl's aquatic frog).